The primary structure comprises 95 residues: Large ribosomal subunit protein uL23 (95 aa).

Belongs to the universal ribosomal protein uL23 family. In terms of assembly, contacts protein L29, and trigger factor when it is bound to the ribosome. Part of the 50S ribosomal subunit.

In terms of biological role, one of the early assembly proteins it binds 23S rRNA. One of the proteins that surrounds the polypeptide exit tunnel on the outside of the ribosome. Forms the main docking site for trigger factor binding to the ribosome. The sequence is that of Large ribosomal subunit protein uL23 from Geobacillus stearothermophilus (Bacillus stearothermophilus).